The sequence spans 541 residues: Chaperonin GroEL 2 (541 aa).

Residues 29 to 32 (TLGP) and 86 to 90 (DGTTT) contribute to the ATP site. K132 is covalently cross-linked (Isoglutamyl lysine isopeptide (Lys-Gln) (interchain with Q-Cter in protein Pup)). ATP-binding positions include G413, 476-478 (NAA), and D492.

Belongs to the chaperonin (HSP60) family. In terms of assembly, forms a cylinder of 14 subunits composed of two heptameric rings stacked back-to-back. Interacts with the co-chaperonin GroES.

The protein localises to the secreted. It localises to the capsule. The protein resides in the cell surface. It is found in the cell wall. It catalyses the reaction ATP + H2O + a folded polypeptide = ADP + phosphate + an unfolded polypeptide.. Its function is as follows. Together with its co-chaperonin GroES, plays an essential role in assisting protein folding. The GroEL-GroES system forms a nano-cage that allows encapsulation of the non-native substrate proteins and provides a physical environment optimized to promote and accelerate protein folding. In Mycolicibacterium smegmatis (strain ATCC 700084 / mc(2)155) (Mycobacterium smegmatis), this protein is Chaperonin GroEL 2.